Here is a 582-residue protein sequence, read N- to C-terminus: Phosphoglucomutase, cytoplasmic (582 aa).

The alpha-D-glucose 1,6-bisphosphate site is built by Arg25 and Ser124. The Phosphoserine intermediate role is filled by Ser124. 4 residues coordinate Mg(2+): Ser124, Asp299, Asp301, and Asp303. Phosphoserine is present on Ser124. Residues Asp303, Arg304, Thr367, Glu386, Ser388, and Lys399 each coordinate alpha-D-glucose 1,6-bisphosphate.

It belongs to the phosphohexose mutase family. In terms of assembly, monomer. It depends on Mg(2+) as a cofactor.

The protein resides in the cytoplasm. The catalysed reaction is alpha-D-glucose 1-phosphate = alpha-D-glucose 6-phosphate. The enzyme catalyses O-phospho-L-seryl-[protein] + alpha-D-glucose 1-phosphate = alpha-D-glucose 1,6-bisphosphate + L-seryl-[protein]. It catalyses the reaction alpha-D-glucose 1,6-bisphosphate + L-seryl-[protein] = O-phospho-L-seryl-[protein] + alpha-D-glucose 6-phosphate. Functionally, catalyzes the reversible isomerization of alpha-D-glucose 1-phosphate to alpha-D-glucose 6-phosphate. The mechanism proceeds via the intermediate compound alpha-D-glucose 1,6-bisphosphate. This enzyme participates in both the breakdown and synthesis of glucose. The chain is Phosphoglucomutase, cytoplasmic (PGM1) from Populus tremula (European aspen).